Reading from the N-terminus, the 586-residue chain is MDEVRRRPPKHIVRKDHDGEVLNSFSHGHHLPPLKPSDYSLPLSLYLANALVFSLFFSVAYFLLHRWREKIRKSTPLHIVTFPEIAALICLVASVIYLLGFFGIGFVHSFSRASTDSWDVEEYDDDNIIIKEDTRPTGACAAPSLDCSLSLPTKIHAPIVSTTTTSTLSDDDEQIIKSVVSGSIPSYSLESKLGNCKRAALIRRETLQRMSGRSLEGLPLDGFDYESILGQCCEMAIGYVQIPVGIAGPLLLDGKEYTVPMATTEGCLVASANRGCKAIYASGGATSVLLRDGMTRAPVVRFPTAKRAADLKFFMEDPDNFDTIAVVFNKSSRFARLQSVQCAIAGKNLYMRFSCSTGDAMGMNMVSKAVQNVIDYLQNDFPDMDVIGLTGNFCADKKAAAVNWIEGRGKSVVCEAIIKEEVVKKVLKTNVAALVELNMIKNLTGSAVAGSLGGFNAHASNMVTAVYIATGQDPAQNVESSHCITMMEAVNDGKDLHISVSMPSIELGTVGGGTQLASQSACLNLLGVKGASKDSPGSNSRLLATIVAGSVLAGELSLMSAIAAGQLVNSHMKYNRSAKDVSKITF.

A run of 2 helical transmembrane segments spans residues 36-59 (PSDY…FFSV) and 87-107 (ALIC…IGFV). The interval 108–170 (HSFSRASTDS…STTTTSTLSD (63 aa)) is linker. 2 catalytic regions span residues 171–586 (DDEQ…KITF) and 172–586 (DEQI…KITF). Active-site charge relay system residues include Glu265, Lys397, and Asp473. His571 functions as the Proton donor in the catalytic mechanism. Asn575 carries N-linked (GlcNAc...) asparagine glycosylation.

Belongs to the HMG-CoA reductase family.

It localises to the endoplasmic reticulum membrane. Its subcellular location is the mitochondrion membrane. The protein localises to the plastid membrane. It catalyses the reaction (R)-mevalonate + 2 NADP(+) + CoA = (3S)-3-hydroxy-3-methylglutaryl-CoA + 2 NADPH + 2 H(+). It functions in the pathway metabolic intermediate biosynthesis; (R)-mevalonate biosynthesis; (R)-mevalonate from acetyl-CoA: step 3/3. In terms of biological role, catalyzes the synthesis of mevalonate. The specific precursor of all isoprenoid compounds present in plants. The chain is 3-hydroxy-3-methylglutaryl-coenzyme A reductase 3 (HMGR3) from Hevea brasiliensis (Para rubber tree).